The primary structure comprises 161 residues: Nucleotide-binding protein lpl1175 (161 aa).

The protein belongs to the YajQ family.

Functionally, nucleotide-binding protein. The protein is Nucleotide-binding protein lpl1175 of Legionella pneumophila (strain Lens).